The primary structure comprises 222 residues: uncharacterized protein (222 aa).

Residues 8–77 (AKKNQIIYRY…NTPGYFVCKD (70 aa)) form the HTH gntR-type domain.

This is an uncharacterized protein from Mycoplasma genitalium (strain ATCC 33530 / DSM 19775 / NCTC 10195 / G37) (Mycoplasmoides genitalium).